The primary structure comprises 228 residues: UPF0758 protein stu1465 (228 aa).

One can recognise an MPN domain in the interval 103–225 (QIMSSQQVAR…YYSFREERED (123 aa)). Zn(2+)-binding residues include His174, His176, and Asp187. Positions 174–187 (HNHPSGEAYPSRND) match the JAMM motif motif.

Belongs to the UPF0758 family.

The sequence is that of UPF0758 protein stu1465 from Streptococcus thermophilus (strain ATCC BAA-250 / LMG 18311).